The primary structure comprises 277 residues: MEMO1 family protein CTN_0605 (277 aa).

This sequence belongs to the MEMO1 family.

In Thermotoga neapolitana (strain ATCC 49049 / DSM 4359 / NBRC 107923 / NS-E), this protein is MEMO1 family protein CTN_0605.